The primary structure comprises 454 residues: Protein disulfide-isomerase TMX3 (454 aa).

Positions 1–24 (MAAWKSWAALRLCATVVLLDMVVC) are cleaved as a signal peptide. The Thioredoxin domain maps to 25-128 (KGFVEDLDES…KDDIIEFAHR (104 aa)). Residues 25–375 (KGFVEDLDES…TIVSIFKSSP (351 aa)) are Lumenal-facing. Residues Cys53 and Cys56 each act as nucleophile in the active site. The cysteines at positions 53 and 56 are disulfide-linked. N-linked (GlcNAc...) asparagine glycosylation is found at Asn258 and Asn313. The chain crosses the membrane as a helical span at residues 376–396 (LMGCFLFGLPLGVISIMCYGI). Over 397-454 (YTADTDGGYIEERYEVSKSENENQEQIEESKEQQEPSSGGSVVPTVQEPKDVLEKKKD) the chain is Cytoplasmic. Residues 412–454 (VSKSENENQEQIEESKEQQEPSSGGSVVPTVQEPKDVLEKKKD) form a disordered region. A compositionally biased stretch (basic and acidic residues) spans 444–454 (EPKDVLEKKKD). Positions 451-454 (KKKD) match the Di-lysine motif motif.

Belongs to the protein disulfide isomerase family.

It is found in the endoplasmic reticulum membrane. The enzyme catalyses Catalyzes the rearrangement of -S-S- bonds in proteins.. Its function is as follows. Probable disulfide isomerase, which participates in the folding of proteins containing disulfide bonds. May act as a dithiol oxidase. Acts as a regulator of endoplasmic reticulum-mitochondria contact sites via its ability to regulate redox signals. The protein is Protein disulfide-isomerase TMX3 (TMX3) of Pongo abelii (Sumatran orangutan).